Consider the following 198-residue polypeptide: Dephospho-CoA kinase (198 aa).

The 195-residue stretch at 4 to 198 folds into the DPCK domain; that stretch reads RIGLTGGIAS…CGLRADGTTW (195 aa). 12-17 contacts ATP; the sequence is ASGKSS.

Belongs to the CoaE family.

The protein resides in the cytoplasm. It carries out the reaction 3'-dephospho-CoA + ATP = ADP + CoA + H(+). Its pathway is cofactor biosynthesis; coenzyme A biosynthesis; CoA from (R)-pantothenate: step 5/5. Its function is as follows. Catalyzes the phosphorylation of the 3'-hydroxyl group of dephosphocoenzyme A to form coenzyme A. The chain is Dephospho-CoA kinase from Parasynechococcus marenigrum (strain WH8102).